The following is a 463-amino-acid chain: L-seryl-tRNA(Sec) selenium transferase (463 aa).

At Lys295 the chain carries N6-(pyridoxal phosphate)lysine.

This sequence belongs to the SelA family. Homodecamer; pentamer of dimers. Binds only one seryl-tRNA(Sec) per dimer. The cofactor is pyridoxal 5'-phosphate.

It localises to the cytoplasm. The enzyme catalyses L-seryl-tRNA(Sec) + selenophosphate + H(+) = L-selenocysteinyl-tRNA(Sec) + phosphate. It functions in the pathway aminoacyl-tRNA biosynthesis; selenocysteinyl-tRNA(Sec) biosynthesis; selenocysteinyl-tRNA(Sec) from L-seryl-tRNA(Sec) (bacterial route): step 1/1. In terms of biological role, converts seryl-tRNA(Sec) to selenocysteinyl-tRNA(Sec) required for selenoprotein biosynthesis. In Shigella sonnei (strain Ss046), this protein is L-seryl-tRNA(Sec) selenium transferase.